The following is a 247-amino-acid chain: tRNA pseudouridine synthase A (247 aa).

D52 serves as the catalytic Nucleophile. Y110 is a binding site for substrate.

The protein belongs to the tRNA pseudouridine synthase TruA family. In terms of assembly, homodimer.

The enzyme catalyses uridine(38/39/40) in tRNA = pseudouridine(38/39/40) in tRNA. Its function is as follows. Formation of pseudouridine at positions 38, 39 and 40 in the anticodon stem and loop of transfer RNAs. The polypeptide is tRNA pseudouridine synthase A (Hyphomonas neptunium (strain ATCC 15444)).